A 391-amino-acid polypeptide reads, in one-letter code: Ferrochelatase (391 aa).

Fe cation is bound by residues His-196 and Glu-281.

Belongs to the ferrochelatase family.

The protein resides in the cytoplasm. It catalyses the reaction heme b + 2 H(+) = protoporphyrin IX + Fe(2+). It functions in the pathway porphyrin-containing compound metabolism; protoheme biosynthesis; protoheme from protoporphyrin-IX: step 1/1. Functionally, catalyzes the ferrous insertion into protoporphyrin IX. This chain is Ferrochelatase, found in Prochlorococcus marinus (strain MIT 9515).